The primary structure comprises 242 residues: AA9 family lytic polysaccharide monooxygenase F (242 aa).

Positions 1–20 (MVQFKLSTASLLALASYAAA) are cleaved as a signal peptide. A Cu(2+)-binding site is contributed by His-21. Residues 31–53 (GQTYPGADPHNPNPESPGWQAEN) form a disordered region. Cystine bridges form between Cys-71–Cys-192 and Cys-112–Cys-116. His-101 is a Cu(2+) binding site. 2 residues coordinate O2: His-178 and Gln-187. Tyr-189 serves as a coordination point for Cu(2+).

It belongs to the polysaccharide monooxygenase AA9 family. Cu(2+) is required as a cofactor.

It localises to the secreted. It carries out the reaction [(1-&gt;4)-beta-D-glucosyl]n+m + reduced acceptor + O2 = 4-dehydro-beta-D-glucosyl-[(1-&gt;4)-beta-D-glucosyl]n-1 + [(1-&gt;4)-beta-D-glucosyl]m + acceptor + H2O.. Functionally, lytic polysaccharide monooxygenase (LPMO) that depolymerizes crystalline and amorphous polysaccharides via the oxidation of scissile alpha- or beta-(1-4)-glycosidic bonds, yielding C1 or C4 oxidation products. Catalysis by LPMOs requires the reduction of the active-site copper from Cu(II) to Cu(I) by a reducing agent and H(2)O(2) or O(2) as a cosubstrate. Active on hemicelluloses, including xylan, glucomannan, and xyloglucan. Shows clear activity on cellooligosaccharides, generating C4 oxidation products. Has no activity on ivory nut mannan (INM), a linear beta-1,4-linked mannan without substitutions. This Malbranchea cinnamomea (Thermophilic fungus) protein is AA9 family lytic polysaccharide monooxygenase F.